Reading from the N-terminus, the 713-residue chain is Polyribonucleotide nucleotidyltransferase (713 aa).

Positions 491 and 497 each coordinate Mg(2+). Positions 558-617 (PRMITIKINPEKIRDVIGKGGSVIRALTEETGTTIDISDDGVVTIASTSSDGMAEAKKRI) constitute a KH domain. Residues 627 to 695 (GQVYEGTVLK…EKGRVRLSAK (69 aa)) enclose the S1 motif domain.

The protein belongs to the polyribonucleotide nucleotidyltransferase family. The cofactor is Mg(2+).

It is found in the cytoplasm. It catalyses the reaction RNA(n+1) + phosphate = RNA(n) + a ribonucleoside 5'-diphosphate. Involved in mRNA degradation. Catalyzes the phosphorolysis of single-stranded polyribonucleotides processively in the 3'- to 5'-direction. This Burkholderia cenocepacia (strain ATCC BAA-245 / DSM 16553 / LMG 16656 / NCTC 13227 / J2315 / CF5610) (Burkholderia cepacia (strain J2315)) protein is Polyribonucleotide nucleotidyltransferase.